The following is a 424-amino-acid chain: Trigger factor (424 aa).

The 86-residue stretch at 163 to 248 (GNTVVLDFEG…IHEIKAKELP (86 aa)) folds into the PPIase FKBP-type domain.

This sequence belongs to the FKBP-type PPIase family. Tig subfamily.

It localises to the cytoplasm. It catalyses the reaction [protein]-peptidylproline (omega=180) = [protein]-peptidylproline (omega=0). In terms of biological role, involved in protein export. Acts as a chaperone by maintaining the newly synthesized protein in an open conformation. Functions as a peptidyl-prolyl cis-trans isomerase. The chain is Trigger factor (tig) from Bacillus subtilis (strain 168).